We begin with the raw amino-acid sequence, 522 residues long: 2-isopropylmalate synthase (522 aa).

A Pyruvate carboxyltransferase domain is found at 5–267 (VIIFDTTLRD…ETGINAKEIH (263 aa)). Residues aspartate 14, histidine 202, histidine 204, and asparagine 238 each coordinate Mn(2+). Residues 392-522 (QLQQLVVQSD…MHKNRELGGV (131 aa)) are regulatory domain.

The protein belongs to the alpha-IPM synthase/homocitrate synthase family. LeuA type 1 subfamily. In terms of assembly, homodimer. The cofactor is Mn(2+).

Its subcellular location is the cytoplasm. It carries out the reaction 3-methyl-2-oxobutanoate + acetyl-CoA + H2O = (2S)-2-isopropylmalate + CoA + H(+). It functions in the pathway amino-acid biosynthesis; L-leucine biosynthesis; L-leucine from 3-methyl-2-oxobutanoate: step 1/4. In terms of biological role, catalyzes the condensation of the acetyl group of acetyl-CoA with 3-methyl-2-oxobutanoate (2-ketoisovalerate) to form 3-carboxy-3-hydroxy-4-methylpentanoate (2-isopropylmalate). In Shewanella sp. (strain MR-4), this protein is 2-isopropylmalate synthase.